The primary structure comprises 229 residues: 7-cyano-7-deazaguanine synthase (229 aa).

9–19 serves as a coordination point for ATP; sequence YSGGLDSTTCM. Positions 189, 199, 202, and 205 each coordinate Zn(2+).

Belongs to the QueC family. It depends on Zn(2+) as a cofactor.

The catalysed reaction is 7-carboxy-7-deazaguanine + NH4(+) + ATP = 7-cyano-7-deazaguanine + ADP + phosphate + H2O + H(+). It functions in the pathway purine metabolism; 7-cyano-7-deazaguanine biosynthesis. Catalyzes the ATP-dependent conversion of 7-carboxy-7-deazaguanine (CDG) to 7-cyano-7-deazaguanine (preQ(0)). This Geotalea daltonii (strain DSM 22248 / JCM 15807 / FRC-32) (Geobacter daltonii) protein is 7-cyano-7-deazaguanine synthase.